The sequence spans 112 residues: Hydrogenase maturation factor HypA (112 aa).

A Ni(2+)-binding site is contributed by His-2. The Zn(2+) site is built by Cys-73, Cys-76, Cys-88, and Cys-91.

This sequence belongs to the HypA/HybF family.

Functionally, involved in the maturation of [NiFe] hydrogenases. Required for nickel insertion into the metal center of the hydrogenase. The chain is Hydrogenase maturation factor HypA from Synechococcus elongatus (strain ATCC 33912 / PCC 7942 / FACHB-805) (Anacystis nidulans R2).